Reading from the N-terminus, the 453-residue chain is RuvB-like helicase 1 (453 aa).

Position 71–78 (71–78 (GGPGTGKT)) interacts with ATP.

This sequence belongs to the RuvB family. As to quaternary structure, may form heterododecamers with RVB2. Component of the SWR1 chromatin remodeling complex, the INO80 chromatin remodeling complex, and of the R2TP complex.

It is found in the nucleus. The enzyme catalyses ATP + H2O = ADP + phosphate + H(+). Its function is as follows. DNA helicase which participates in several chromatin remodeling complexes, including the SWR1 and the INO80 complexes. The SWR1 complex mediates the ATP-dependent exchange of histone H2A for the H2A variant HZT1 leading to transcriptional regulation of selected genes by chromatin remodeling. The INO80 complex remodels chromatin by shifting nucleosomes and is involved in DNA repair. Also involved in pre-rRNA processing. The chain is RuvB-like helicase 1 (RVB1) from Yarrowia lipolytica (strain CLIB 122 / E 150) (Yeast).